The chain runs to 334 residues: D-fructose 1,6-bisphosphatase class 2/sedoheptulose 1,7-bisphosphatase (334 aa).

Mn(2+)-binding residues include Asp33, Glu57, Asp85, and Glu88. Residues 88 to 90 (EGT), Tyr119, 164 to 166 (RAR), and 186 to 188 (DGD) each bind substrate. Glu213 is a binding site for Mn(2+).

The protein belongs to the FBPase class 2 family. As to quaternary structure, homotetramer. Mn(2+) serves as cofactor.

The enzyme catalyses beta-D-fructose 1,6-bisphosphate + H2O = beta-D-fructose 6-phosphate + phosphate. The catalysed reaction is D-sedoheptulose 1,7-bisphosphate + H2O = D-sedoheptulose 7-phosphate + phosphate. The protein operates within carbohydrate biosynthesis; Calvin cycle. Its function is as follows. Catalyzes the hydrolysis of fructose 1,6-bisphosphate (Fru 1,6-P2) and sedoheptulose 1,7-bisphosphate (Sed 1,7-P2) to fructose 6-phosphate and sedoheptulose 7-phosphate, respectively. The polypeptide is D-fructose 1,6-bisphosphatase class 2/sedoheptulose 1,7-bisphosphatase (Synechococcus sp. (strain CC9605)).